The chain runs to 278 residues: Large ribosomal subunit protein uL24m (278 aa).

The KOW domain maps to 109 to 142; that stretch reads FFPGDLVQVMVGKDKGRQGLVLTTSRDSSDVIVD.

Belongs to the universal ribosomal protein uL24 family.

It localises to the mitochondrion. In Caenorhabditis elegans, this protein is Large ribosomal subunit protein uL24m (mrpl-24).